A 227-amino-acid polypeptide reads, in one-letter code: DNA repair protein RecO (227 aa).

Belongs to the RecO family.

Its function is as follows. Involved in DNA repair and RecF pathway recombination. The protein is DNA repair protein RecO of Pseudomonas savastanoi pv. phaseolicola (strain 1448A / Race 6) (Pseudomonas syringae pv. phaseolicola (strain 1448A / Race 6)).